Here is a 278-residue protein sequence, read N- to C-terminus: NAD-dependent protein deacylase (278 aa).

The region spanning Arg-22–Thr-270 is the Deacetylase sirtuin-type domain. Gly-46–Trp-65 is an NAD(+) binding site. Substrate is bound by residues Tyr-90 and Arg-93. Gln-127–Asp-130 provides a ligand contact to NAD(+). The Proton acceptor role is filled by His-145. 2 residues coordinate Zn(2+): Cys-153 and Cys-172. Residues Gly-212 to Ser-214, Asn-238 to Glu-240, and Ala-256 each bind NAD(+).

The protein belongs to the sirtuin family. Class III subfamily. The cofactor is Zn(2+).

The protein localises to the cytoplasm. The enzyme catalyses N(6)-acetyl-L-lysyl-[protein] + NAD(+) + H2O = 2''-O-acetyl-ADP-D-ribose + nicotinamide + L-lysyl-[protein]. It carries out the reaction N(6)-succinyl-L-lysyl-[protein] + NAD(+) + H2O = 2''-O-succinyl-ADP-D-ribose + nicotinamide + L-lysyl-[protein]. It catalyses the reaction N(6)-(2-hydroxyisobutanoyl)-L-lysyl-[protein] + NAD(+) + H2O = 2''-O-(2-hydroxyisobutanoyl)-ADP-D-ribose + nicotinamide + L-lysyl-[protein]. NAD-dependent lysine deacetylase that specifically removes acetyl groups on target proteins. Also acts as a protein-lysine deacylase by mediating protein desuccinylation and de-2-hydroxyisobutyrylation. Modulates the activities of several proteins which are inactive in their acylated form. The polypeptide is NAD-dependent protein deacylase (Yersinia pestis).